The primary structure comprises 183 residues: Large ribosomal subunit protein uL10 (183 aa).

Belongs to the universal ribosomal protein uL10 family. Part of the ribosomal stalk of the 50S ribosomal subunit. The N-terminus interacts with L11 and the large rRNA to form the base of the stalk. The C-terminus forms an elongated spine to which L12 dimers bind in a sequential fashion forming a multimeric L10(L12)X complex.

Functionally, forms part of the ribosomal stalk, playing a central role in the interaction of the ribosome with GTP-bound translation factors. This is Large ribosomal subunit protein uL10 from Mesomycoplasma hyopneumoniae (strain 232) (Mycoplasma hyopneumoniae).